The following is a 73-amino-acid chain: Putative membrane protein insertion efficiency factor (73 aa).

Belongs to the UPF0161 family.

It is found in the cell inner membrane. In terms of biological role, could be involved in insertion of integral membrane proteins into the membrane. This Neisseria gonorrhoeae (strain ATCC 700825 / FA 1090) protein is Putative membrane protein insertion efficiency factor.